The primary structure comprises 368 residues: Glutaminyl-peptide cyclotransferase (368 aa).

Residues 1–23 form the signal peptide; sequence MARERRDSKAATFFCLAWALCLA. N53 and N65 each carry an N-linked (GlcNAc...) asparagine glycan. A disulfide bond links C143 and C169. A Zn(2+)-binding site is contributed by D164. E207 acts as the Proton acceptor in catalysis. E208 is a Zn(2+) binding site. Residue D254 is the Proton acceptor of the active site. N-linked (GlcNAc...) asparagine glycosylation is present at N292. H336 is a Zn(2+) binding site. N-linked (GlcNAc...) asparagine glycosylation occurs at N352.

This sequence belongs to the glutaminyl-peptide cyclotransferase family. As to expression, expressed by the venom gland.

Its subcellular location is the secreted. The catalysed reaction is N-terminal L-glutaminyl-[peptide] = N-terminal 5-oxo-L-prolyl-[peptide] + NH4(+). In terms of biological role, responsible for the biosynthesis of pyroglutamyl peptides. Has a bias against acidic and tryptophan residues adjacent to the N-terminal glutaminyl residue and a lack of importance of chain length after the second residue. Also catalyzes N-terminal pyroglutamate formation. The chain is Glutaminyl-peptide cyclotransferase (QPCT) from Bothrops jararaca (Jararaca).